A 777-amino-acid chain; its full sequence is E3 UFM1-protein ligase 1 homolog (777 aa).

Over residues 396 to 417 (MKHQDPMDRDSAVGEGKADKRE) the composition is skewed to basic and acidic residues. Residues 396-470 (MKHQDPMDRD…PSGGKKGGKD (75 aa)) form a disordered region.

The protein belongs to the UFL1 family.

Its function is as follows. E3 UFM1-protein ligase that mediates ufmylation of target proteins. The chain is E3 UFM1-protein ligase 1 homolog from Aedes aegypti (Yellowfever mosquito).